A 361-amino-acid polypeptide reads, in one-letter code: 4-hydroxytryptamine kinase (361 aa).

ATP-binding positions include asparagine 37, lysine 57, and 118–120 (QDV). Residue aspartate 224 is part of the active site. 248 to 250 (DWE) provides a ligand contact to ATP.

Belongs to the methylthioribose kinase family. Monomer. Mg(2+) serves as cofactor.

It carries out the reaction 4-hydroxytryptamine + ATP = norbaeocystin + ADP + H(+). It catalyses the reaction psilocin + ATP = psilocybin + ADP + H(+). The enzyme catalyses 4-hydroxy-N,N,N-trimethyltryptamine + ATP = aeruginascin + ADP + H(+). Its pathway is secondary metabolite biosynthesis. Its function is as follows. 4-hydroxytryptamine kinase; part of the gene cluster that mediates the biosynthesis of psilocybin, a psychotropic tryptamine-derived natural product. The first step in the pathway is the decarboxylation of L-tryptophan to tryptamine by the decarboxylase psiD. PsiD does not decarboxylate phenylalanine, tyrosine, or 5-hydroxy- L -tryptophan (5-HTP). 4-hydroxy-L-tryptophan is accepted as substrate by psiD as well. The cytochrome P450 monooxygenase psiH then converts tryptamine to 4-hydroxytryptamine. The kinase psiK catalyzes the 4-O-phosphorylation step by converting 4-hydroxytryptamine into norbaeocystin. The methyltransferase psiM then catalyzes iterative methyl transfer to the amino group of norbaeocystin to yield psilocybin via a monomethylated intermediate, baeocystin. 4-hydroxy-6-methyl-l-tryptophancan also be converted the decarboxylase PsiD, kinase PsiK, and methyltransferase PsiM into respectively 6-methyl-norbaeocystin, 6-methylbaeocystin, and 6-methylpsilocybin. PsiK kinase can also turn psilocin into psilocybin. This activity may represent a protective mechanism to rephosphorylate the unstable psilocin to the stable psilocybin in case of intracellular ester cleavage. Moreover, psiK is able to O-phosphorylate the quaternary amine 4-hydroxy-N,N,N-trimethyltryptamine (4-OH-TMT) to yield aeruginascin, another bioactive compound found in Psilocybe species. The polypeptide is 4-hydroxytryptamine kinase (Psilocybe cyanescens).